Here is a 707-residue protein sequence, read N- to C-terminus: Early transcription factor 82 kDa subunit (707 aa).

It belongs to the poxviridae VETF large subunit family. As to quaternary structure, heterodimer of a 70 kDa and a 82 kDa subunit. Part of the early transcription complex composed of ETF, RAP94, and the DNA-directed RNA polymerase.

The protein localises to the virion. In terms of biological role, acts with RNA polymerase to initiate transcription from early gene promoters. Is recruited by the RPO-associated protein of 94 kDa (RAP94) to form the early transcription complex, which also contains the core RNA polymerase. ETF heterodimer binds to early gene promoters. This Molluscum contagiosum virus subtype 1 (MOCV) protein is Early transcription factor 82 kDa subunit (VETFL).